Consider the following 549-residue polypeptide: Cation/acetate symporter ActP (549 aa).

13 helical membrane passes run 33–53 (WQAIIMFLIFVVFTLGITYWA), 77–97 (LAIAGDYMSAASFLGISALVF), 103–123 (GLIYSLGFLVGWPIILFLIAE), 148–168 (ILSACGSLVVVALYLIAQMVG), 183–203 (IAVVLVGVLMMMYVLFGGMLA), 206–226 (WVQIIKAVLLLFGASFMAFMV), 262–282 (ISALSLGLGLMFGTAGLPHIL), 303–323 (GFMGYFYILTFIIGFGAIMLV), 355–375 (LFLGFISAVAFATILAVVAGL), 404–424 (VSKITVLILGVIAIILGMLFE), 428–448 (IAFMVGLAFAIAASCNFPIIL), 464–484 (GGWLGLITAVVLMILGPTIWV), and 493–513 (IFPYEYPALFSISVAFLGIWF).

Belongs to the sodium:solute symporter (SSF) (TC 2.A.21) family.

Its subcellular location is the cell inner membrane. In terms of biological role, transports acetate. This is Cation/acetate symporter ActP from Shigella boydii serotype 4 (strain Sb227).